The following is a 425-amino-acid chain: Monoacylglycerol lipase ABHD2 (425 aa).

The Cytoplasmic segment spans residues 1–9; that stretch reads MNAMLETPE. A helical; Signal-anchor for type II membrane protein membrane pass occupies residues 10-30; sequence LPAVFDGVKLAAVAAVLYVIV. Residues 31-425 are Extracellular-facing; that stretch reads RCLNLKSPTA…DTEQVEADLE (395 aa). An AB hydrolase-1 domain is found at 128–382; the sequence is MVICPGIANH…HGGHLGFFEG (255 aa). Asn-136 is a glycosylation site (N-linked (GlcNAc...) asparagine). The active-site Nucleophile is the Ser-207. Residues Asp-345 and His-376 each act as charge relay system in the active site.

It belongs to the AB hydrolase superfamily. AB hydrolase 4 family. In terms of tissue distribution, present in sperm (at protein level).

It localises to the cell projection. The protein localises to the cilium. Its subcellular location is the flagellum membrane. It is found in the cell membrane. It carries out the reaction an acetyl ester + H2O = an aliphatic alcohol + acetate + H(+). The enzyme catalyses Hydrolyzes glycerol monoesters of long-chain fatty acids.. It catalyses the reaction a triacylglycerol + H2O = a diacylglycerol + a fatty acid + H(+). The catalysed reaction is 2-(5Z,8Z,11Z,14Z-eicosatetraenoyl)-glycerol + H2O = glycerol + (5Z,8Z,11Z,14Z)-eicosatetraenoate + H(+). It carries out the reaction a butanoate ester + H2O = an aliphatic alcohol + butanoate + H(+). The enzyme catalyses hexadecanoate ester + H2O = an aliphatic alcohol + hexadecanoate + H(+). Its activity is regulated as follows. Acylglycerol lipase activity is activated upon binding to progesterone. Its function is as follows. Progesterone-dependent acylglycerol lipase that catalyzes hydrolysis of endocannabinoid arachidonoylglycerol (AG) from cell membrane. Acts as a progesterone receptor: progesterone-binding activates the acylglycerol lipase activity, mediating degradation of 1-arachidonoylglycerol (1AG) and 2-arachidonoylglycerol (2AG) to glycerol and arachidonic acid (AA). Also displays an ester hydrolase activity against acetyl ester, butanoate ester and hexadecanoate ester. Plays a key role in sperm capacitation in response to progesterone by mediating degradation of 2AG, an inhibitor of the sperm calcium channel CatSper, leading to calcium influx via CatSper and sperm activation. May also play a role in smooth muscle cells migration. The protein is Monoacylglycerol lipase ABHD2 of Homo sapiens (Human).